A 100-amino-acid chain; its full sequence is Small ribosomal subunit protein uS14c (100 aa).

Belongs to the universal ribosomal protein uS14 family. In terms of assembly, part of the 30S ribosomal subunit.

Its subcellular location is the plastid. It localises to the chloroplast. Binds 16S rRNA, required for the assembly of 30S particles. This is Small ribosomal subunit protein uS14c from Eucalyptus globulus subsp. globulus (Tasmanian blue gum).